The following is a 101-amino-acid chain: Small ribosomal subunit protein bS18c (101 aa).

Residues 1–19 are compositionally biased toward basic residues; it reads MNKSKRPFTKSKRSFRRRL. The tract at residues 1–23 is disordered; sequence MNKSKRPFTKSKRSFRRRLPPIQ.

This sequence belongs to the bacterial ribosomal protein bS18 family. Part of the 30S ribosomal subunit.

The protein resides in the plastid. Its subcellular location is the chloroplast. The polypeptide is Small ribosomal subunit protein bS18c (Lobularia maritima (Sweet alyssum)).